Consider the following 426-residue polypeptide: MSVWALGLNHTTAPLDLRGRFAYALDQIEPTLRGLRESLARQPEATLLSTCNRTEIYCAGDHNDLEHTLEWLAHNGGVSPALLRSHAYTLQDDQAARHAFRVASGLDSMVLGEPQILGQLKDAVRAAEDAGAMGSTLHQLFQRSFAVAKEVRTSTEIGAHSISMAAASVRLAGQLFENLGDIRVLFVGAGEMIDLAATHFAAKTPKSMAIANRTLERGEKLASRFGAEVMRLADLPSRLHEFDAVISCTASTLPIIGLGAVERAVKLRKHRPMFMVDLAVPRDIEPEVKDLPDIYLYTVDDLAHVVQTGKDNRQAAVAQAEVIIDAGVQNFMHWLGQRRTVPLIQQLNAQTDEWRAAEIARAKKLIAKGEPMDAVLDALTRGLTQKMLHGALAELHAGDAASREATAHTVSRLFLRGQPPKEHKER.

Residues 50-53 (TCNR), serine 108, 113-115 (EPQ), and glutamine 119 each bind substrate. The active-site Nucleophile is the cysteine 51. Position 188–193 (188–193 (GAGEMI)) interacts with NADP(+).

It belongs to the glutamyl-tRNA reductase family. In terms of assembly, homodimer.

The enzyme catalyses (S)-4-amino-5-oxopentanoate + tRNA(Glu) + NADP(+) = L-glutamyl-tRNA(Glu) + NADPH + H(+). It functions in the pathway porphyrin-containing compound metabolism; protoporphyrin-IX biosynthesis; 5-aminolevulinate from L-glutamyl-tRNA(Glu): step 1/2. Functionally, catalyzes the NADPH-dependent reduction of glutamyl-tRNA(Glu) to glutamate 1-semialdehyde (GSA). The chain is Glutamyl-tRNA reductase from Polaromonas sp. (strain JS666 / ATCC BAA-500).